A 1252-amino-acid chain; its full sequence is ABC transporter B family member 19 (1252 aa).

A glycan (N-linked (GlcNAc...) asparagine) is linked at N5. The 290-residue stretch at 41 to 330 (MFVGSLGAIV…SFSNLGAFSK (290 aa)) folds into the ABC transmembrane type-1 1 domain. Transmembrane regions (helical) follow at residues 42 to 62 (FVGS…FLLF) and 88 to 108 (LYFV…IACW). ATP is bound at residue D136. Helical transmembrane passes span 163-183 (VGNF…GFVS), 187-207 (LALL…LYAY), 274-294 (CTYG…GVFI), and 308-328 (IFSA…LGAF). Positions 276 and 283 each coordinate brassinolide. One can recognise an ABC transporter 1 domain in the interval 365 to 601 (IEFKDVTFSY…SGAYASLIRF (237 aa)). Residues Y374, S376, G405, K406, S407, T408, and E529 each coordinate ATP. Residue N641 is glycosylated (N-linked (GlcNAc...) asparagine). The 289-residue stretch at 687-975 (SIMGAVGSIL…TVSLAPEIIR (289 aa)) folds into the ABC transmembrane type-1 2 domain. 2 helical membrane passes run 688–708 (IMGA…AIVM) and 732–752 (FIYI…HYFF). N758 carries N-linked (GlcNAc...) asparagine glycosylation. D780 serves as a coordination point for ATP. 2 N-linked (GlcNAc...) asparagine glycosylation sites follow: N785 and N814. The next 3 helical transmembrane spans lie at 822 to 842 (FIVA…TFPL), 914 to 934 (GFLF…ILWY), and 949 to 969 (VIKV…TVSL). The segment at 965–1252 (ETVSLAPEII…RLLQLQTHRI (288 aa)) is interaction with FKBP42/TWD1. Residues 1010-1246 (IEFRHVDFAY…PEGAYSRLLQ (237 aa)) enclose the ABC transporter 2 domain. Residues Y1019, S1021, R1022, K1051, S1052, and S1053 each contribute to the ATP site.

The protein belongs to the ABC transporter superfamily. ABCB family. Multidrug resistance exporter (TC 3.A.1.201) subfamily. As to quaternary structure, interacts with 1-naphthylphthalamic acid (NPA), and FKBP42/TWD1. In terms of processing, phosphorylated by PHOT1 in phototropic seedlings, to modulates auxin export and distribution and regulates leaf and petiole curling. As to expression, ubiquitous, mostly in shoot meristems. Present in the majority of stem cells, predominantly in a non-polar manner. Accumulates in seedlings roots and hypocotyls, and in roots apices and inflorescences.

Its subcellular location is the cell membrane. It carries out the reaction (indol-3-yl)acetate(in) + ATP + H2O = (indol-3-yl)acetate(out) + ADP + phosphate + H(+). The enzyme catalyses brassinolide(in) + ATP + H2O = brassinolide(out) + ADP + phosphate + H(+). The catalysed reaction is 24-epi-brassinolide(in) + ATP + H2O = 24-epi-brassinolide(out) + ADP + phosphate + H(+). It catalyses the reaction 24-epi-castasterone(in) + ATP + H2O = 24-epi-castasterone(out) + ADP + phosphate + H(+). It carries out the reaction castasterone(in) + ATP + H2O = castasterone(out) + ADP + phosphate + H(+). Its activity is regulated as follows. Transport capacity is stimulated by the chaperone protein FKBP42/TWD1. ATPase activity is specifically activated by bioactive brassinosteroids in a dose-dependent manner, including brassinolide (BL), 24-epiBL and 24-epicastasterone (24-epiCS). Inhibited by vanadate. Brassinosteroid exporter that, in conjunction with ABCB1, supports the accumulation of exogenous brassinosteroids (BR) in the apoplast, thus promoting BR signaling initiation involving the specific receptor BRI1 and required for plant growth and stress responses. Mediates the transport of castasterone (CSA) and brassinolide (BL) across the plasma membrane. Auxin efflux transporter that acts as a negative regulator of light signaling to promote hypocotyl elongation by mediating leaf tip to petiole auxin flux. Required for the regulation of leaf position and morphology during PHOT1-mediated blue light responses involving auxin distribution, especially in low light fluence. Together with ABCB1 and in a FKBP42/TWD1-dependent manner, supports seed development by promoting stamen elongation and, to a lesser extent, anther dehiscence and pollen maturation, probably as auxin transporters. Contributes to the connective auxin transport (CAT) that ensures communication across the shoot system, including auxin loading at axillary bud apices to influence strigolactone-mediated bud outgrowth responses and shoot branching control. Mediates the accumulation of chlorophyll and anthocyanin, as well as the expression of genes in response to light. Participates in auxin efflux and thus regulates the polar auxin basipetal transport (from auxin-producing leaves to auxin-sensitive tissues, and from root tips to root elongating zone). Involved in diverse auxin-mediated responses including gravitropism, phototropism and lateral root formation. Required for the regulation of organ bending, such as gravitropic root bending. The chain is ABC transporter B family member 19 from Arabidopsis thaliana (Mouse-ear cress).